The primary structure comprises 216 residues: Octanoyltransferase (216 aa).

The BPL/LPL catalytic domain maps to 33-216 (AATADELWIV…ANRLSTSLSR (184 aa)). Residues 72 to 79 (RGGEVTYH), 148 to 150 (ALG), and 162 to 164 (GVS) contribute to the substrate site. The Acyl-thioester intermediate role is filled by Cys-180.

Belongs to the LipB family.

It localises to the cytoplasm. It carries out the reaction octanoyl-[ACP] + L-lysyl-[protein] = N(6)-octanoyl-L-lysyl-[protein] + holo-[ACP] + H(+). Its pathway is protein modification; protein lipoylation via endogenous pathway; protein N(6)-(lipoyl)lysine from octanoyl-[acyl-carrier-protein]: step 1/2. Functionally, catalyzes the transfer of endogenously produced octanoic acid from octanoyl-acyl-carrier-protein onto the lipoyl domains of lipoate-dependent enzymes. Lipoyl-ACP can also act as a substrate although octanoyl-ACP is likely to be the physiological substrate. The sequence is that of Octanoyltransferase from Janthinobacterium sp. (strain Marseille) (Minibacterium massiliensis).